The primary structure comprises 563 residues: Chaperonin GroEL 1 (563 aa).

ATP-binding positions include 29-32, 86-90, Gly-413, and Asp-492; these read TIGP and DGTTT. The interval 520 to 541 is disordered; sequence DKPEPPSAPGAEGGDPMGGMGG. Over residues 530-541 the composition is skewed to gly residues; it reads AEGGDPMGGMGG.

It belongs to the chaperonin (HSP60) family. As to quaternary structure, forms a cylinder of 14 subunits composed of two heptameric rings stacked back-to-back. Interacts with the co-chaperonin GroES.

It localises to the cytoplasm. It carries out the reaction ATP + H2O + a folded polypeptide = ADP + phosphate + an unfolded polypeptide.. In terms of biological role, together with its co-chaperonin GroES, plays an essential role in assisting protein folding. The GroEL-GroES system forms a nano-cage that allows encapsulation of the non-native substrate proteins and provides a physical environment optimized to promote and accelerate protein folding. The polypeptide is Chaperonin GroEL 1 (Prochlorococcus marinus (strain NATL1A)).